Consider the following 245-residue polypeptide: Ribonuclease 3 (245 aa).

Positions 24–146 constitute an RNase III domain; it reads YTVFSQKLGY…IIGAIYLESG (123 aa). Mg(2+) is bound at residue E59. D63 is a catalytic residue. Mg(2+)-binding residues include N132 and E135. Residue E135 is part of the active site. Residues 173-243 enclose the DRBM domain; sequence DPKTLLQEYL…ARRAYKLAVV (71 aa).

It belongs to the ribonuclease III family. In terms of assembly, homodimer. Mg(2+) is required as a cofactor.

It localises to the cytoplasm. It carries out the reaction Endonucleolytic cleavage to 5'-phosphomonoester.. In terms of biological role, digests double-stranded RNA. Involved in the processing of primary rRNA transcript to yield the immediate precursors to the large and small rRNAs (23S and 16S). Processes some mRNAs, and tRNAs when they are encoded in the rRNA operon. Processes pre-crRNA and tracrRNA of type II CRISPR loci if present in the organism. The chain is Ribonuclease 3 from Nitrosomonas eutropha (strain DSM 101675 / C91 / Nm57).